We begin with the raw amino-acid sequence, 67 residues long: Large ribosomal subunit protein bL35 (67 aa).

It belongs to the bacterial ribosomal protein bL35 family.

This chain is Large ribosomal subunit protein bL35, found in Acidiphilium cryptum (strain JF-5).